Reading from the N-terminus, the 214-residue chain is Clavatol biosynthesis cluster protein B (214 aa).

The N-terminal stretch at methionine 1–alanine 17 is a signal peptide. Residues asparagine 103 and asparagine 204 are each glycosylated (N-linked (GlcNAc...) asparagine).

The protein operates within secondary metabolite biosynthesis. In terms of biological role, part of the cla gene cluster that produces clavatol and ortho-quinone methide. The clavatol biosynthesis cluster cla and the terrestric acid cluster tra are both involved in the production of peniphenones and penilactones. The non-reducing PKS claF is responsible for the formation of clavatol from successive condensations of 3 malonyl-CoA units, presumably with a simple acetyl-CoA starter unit, and 2 methylation steps. The esterase claE probably collaborates with claF by catalyzing the hydrolysis of ACP-bound acyl intermediates to free the ACP from stalled intermediates. The clavatol oxidase claD then converts clavatol to hydroxyclavatol. Spontaneous dehydration of hydroxyclavatol leads to the accumulation of the highly active ortho-quinone methide. On the other hand, the PKS-NRPS hybrid traA is involved in the formation of crustosic acid, with the help of traB and traD. The polyketide synthase module (PKS) of traA is responsible for the synthesis of the polyketide backbone via the condensation of an acetyl-CoA starter unit with 3 malonyl-CoA units. The downstream nonribosomal peptide synthetase (NRPS) module then amidates the carboxyl end of the polyketide with L-malic acid. Because traA lacks a designated enoylreductase (ER) domain, the required activity is provided the enoyl reductase traG. Crustosic acid undergoes decarboxylation and isomerization to the terrestric acid, catalyzed by the 2-oxoglutarate-dependent dioxygenase traH. Both acids are further converted to the 2 gamma-butyrolactones (R)-5-methyltetronic acid and (S)-5-carboxylmethyltetronic acid, with involvement of the cytochrome P450 monooxygenase claJ. Spontaneous addition of the methide to these gamma-butyrolactones leads to peniphenone D and penilactone D, which undergo again stereospecific attacking by methide to give penilactones A and B. The function of claB has not been investigated yet. The sequence is that of Clavatol biosynthesis cluster protein B from Penicillium crustosum (Blue mold fungus).